Here is a 201-residue protein sequence, read N- to C-terminus: MSYELPALPFDYTALAPYITKETLEFHHDKHHAAYVNNYNNAVKDTDLDGQPIEAVIKAIAGDASKAGLFNNAAQAWNHSFYWNSIKPNGGGAPTGALADKIAADFGSFENFVTEFKQAAATQFGSGWAWLVLDNGTLKITKTGNADTPIAHGQTPLLTIDVWEHAYYLDYQNRRPDYISTFVEKLANWDFASANYAAAIA.

Fe cation is bound by residues His27, His79, Asp161, and His165.

This sequence belongs to the iron/manganese superoxide dismutase family. Homodimer. Requires Fe cation as cofactor.

The catalysed reaction is 2 superoxide + 2 H(+) = H2O2 + O2. In terms of biological role, destroys superoxide anion radicals which are normally produced within the cells and which are toxic to biological systems. The sequence is that of Superoxide dismutase [Fe] (sodB) from Synechococcus elongatus (strain ATCC 33912 / PCC 7942 / FACHB-805) (Anacystis nidulans R2).